Here is a 207-residue protein sequence, read N- to C-terminus: Large ribosomal subunit protein uL4 (207 aa).

Positions 48–86 (THKVKNRSEVRGGGRKPWRQKGTGRARQGSIRSPQWRGG) are disordered. Over residues 60–71 (GGRKPWRQKGTG) the composition is skewed to basic residues.

It belongs to the universal ribosomal protein uL4 family. As to quaternary structure, part of the 50S ribosomal subunit.

Functionally, one of the primary rRNA binding proteins, this protein initially binds near the 5'-end of the 23S rRNA. It is important during the early stages of 50S assembly. It makes multiple contacts with different domains of the 23S rRNA in the assembled 50S subunit and ribosome. Forms part of the polypeptide exit tunnel. This chain is Large ribosomal subunit protein uL4, found in Bacillus licheniformis (strain ATCC 14580 / DSM 13 / JCM 2505 / CCUG 7422 / NBRC 12200 / NCIMB 9375 / NCTC 10341 / NRRL NRS-1264 / Gibson 46).